We begin with the raw amino-acid sequence, 490 residues long: MSQLKNGSSQCLWTSICIVLIVMSMAREAVSTNYAEALKNSLLYFEAQRSGKLPPNQRVTWRGDSALRDGSDAHIDLTGGYYDAGDNMKFGFPLAFTTTMLAWSNIEMASQLRAHHEKGNALRALKWATDYLIKAHPQPNVLYGQVGEGNSDHKCWMRPEDMTTPRTSYRIDAQHPGSDLAGETAAAMAAASIAFAPSDKAYANILIGHAKDLFAFAKAHRGLYQNSIPNAGGFYASSGYEDELLWAAAWLHRATNDQIYLDYLTEAETGGPRTVFAWDDKFVGAQVLVAKLALEGKVESSEQIVEYKSMAEQFICNCAQKGDNNVKKTPGGLLYFLPWNNLQYTTAATFVLSAYSKYLEAAKASIDCPDGALQASDLLQVARSQVDYILGSNPQKMSYMVGVGTNYPKKPHHRAASIVSIRQDKTPVTCSGGYDKWYNNPAPNPNVLAGAVVGGPDDNDVYGDERSNFQQAEPATVTTAPLVGVLALVF.

The N-terminal stretch at 1-26 (MSQLKNGSSQCLWTSICIVLIVMSMA) is a signal peptide. N-linked (GlcNAc...) asparagine glycosylation occurs at Asn6. The active-site Nucleophile is the Asp86. Catalysis depends on residues His412, Asp464, and Glu473.

Belongs to the glycosyl hydrolase 9 (cellulase E) family.

Its subcellular location is the secreted. It catalyses the reaction Endohydrolysis of (1-&gt;4)-beta-D-glucosidic linkages in cellulose, lichenin and cereal beta-D-glucans.. The polypeptide is Endoglucanase 13 (Arabidopsis thaliana (Mouse-ear cress)).